The following is a 38-amino-acid chain: Large ribosomal subunit protein bL36 (38 aa).

This sequence belongs to the bacterial ribosomal protein bL36 family.

The polypeptide is Large ribosomal subunit protein bL36 (Azotobacter vinelandii (strain DJ / ATCC BAA-1303)).